The sequence spans 262 residues: Matrilysin (262 aa).

Residues 1 to 12 form the signal peptide; sequence LCVLCLLPQSPA. Residues 13–89 constitute a propeptide, activation peptide; the sequence is LPLPREAGGH…PRCGLPDTGE (77 aa). A Cysteine switch motif is present at residues 80-87; the sequence is PRCGLPDT. Position 82 (Cys-82) interacts with Zn(2+). Asp-148 serves as a coordination point for Ca(2+). The Zn(2+) site is built by His-158 and Asp-160. Residues Asp-165, Gly-166, Gly-168, and Thr-170 each coordinate Ca(2+). His-173 provides a ligand contact to Zn(2+). Residues Gly-180, Gly-182, and Asp-184 each contribute to the Ca(2+) site. Zn(2+) is bound at residue His-186. Residues Asp-188 and Glu-191 each contribute to the Ca(2+) site. Residue His-209 participates in Zn(2+) binding. Glu-210 is an active-site residue. Positions 213 and 219 each coordinate Zn(2+).

Belongs to the peptidase M10A family. The cofactor is Ca(2+). It depends on Zn(2+) as a cofactor.

The protein resides in the secreted. The protein localises to the extracellular space. It is found in the extracellular matrix. The catalysed reaction is Cleavage of 14-Ala-|-Leu-15 and 16-Tyr-|-Leu-17 in B chain of insulin. No action on collagen types I, II, IV, V. Cleaves gelatin chain alpha2(I) &gt; alpha1(I).. In terms of biological role, degrades casein, gelatins of types I, III, IV, and V, and fibronectin. Activates procollagenase. This is Matrilysin (MMP7) from Felis catus (Cat).